The following is a 514-amino-acid chain: ATP synthase subunit alpha (514 aa).

170–177 (GDRQIGKT) lines the ATP pocket.

The protein belongs to the ATPase alpha/beta chains family. As to quaternary structure, F-type ATPases have 2 components, CF(1) - the catalytic core - and CF(0) - the membrane proton channel. CF(1) has five subunits: alpha(3), beta(3), gamma(1), delta(1), epsilon(1). CF(0) has three main subunits: a(1), b(2) and c(9-12). The alpha and beta chains form an alternating ring which encloses part of the gamma chain. CF(1) is attached to CF(0) by a central stalk formed by the gamma and epsilon chains, while a peripheral stalk is formed by the delta and b chains.

The protein resides in the cell inner membrane. The catalysed reaction is ATP + H2O + 4 H(+)(in) = ADP + phosphate + 5 H(+)(out). In terms of biological role, produces ATP from ADP in the presence of a proton gradient across the membrane. The alpha chain is a regulatory subunit. This is ATP synthase subunit alpha from Pseudomonas entomophila (strain L48).